Here is a 644-residue protein sequence, read N- to C-terminus: Exoribonuclease 2 (644 aa).

An RNB domain is found at 189 to 516 (REDLTALNFV…NHRLLKAVIT (328 aa)). The S1 motif domain maps to 561-643 (DIRFNAEIID…ETRGIVAKPA (83 aa)).

It belongs to the RNR ribonuclease family. RNase II subfamily.

The protein resides in the cytoplasm. It carries out the reaction Exonucleolytic cleavage in the 3'- to 5'-direction to yield nucleoside 5'-phosphates.. Functionally, involved in mRNA degradation. Hydrolyzes single-stranded polyribonucleotides processively in the 3' to 5' direction. This is Exoribonuclease 2 from Pectobacterium atrosepticum (strain SCRI 1043 / ATCC BAA-672) (Erwinia carotovora subsp. atroseptica).